The following is a 331-amino-acid chain: L-lactate dehydrogenase A chain (331 aa).

NAD(+) is bound by residues 29–57 (GMVG…MEDK) and arginine 98. Residues arginine 105, asparagine 137, and arginine 168 each coordinate substrate. NAD(+) is bound at residue asparagine 137. Histidine 192 acts as the Proton acceptor in catalysis. Threonine 247 provides a ligand contact to substrate.

It belongs to the LDH/MDH superfamily. LDH family. Homotetramer.

The protein localises to the cytoplasm. It catalyses the reaction (S)-lactate + NAD(+) = pyruvate + NADH + H(+). It participates in fermentation; pyruvate fermentation to lactate; (S)-lactate from pyruvate: step 1/1. In terms of biological role, interconverts simultaneously and stereospecifically pyruvate and lactate with concomitant interconversion of NADH and NAD(+). The sequence is that of L-lactate dehydrogenase A chain (ldha) from Paranotothenia magellanica (Maori cod).